The chain runs to 510 residues: NAD(P)H-quinone oxidoreductase subunit 2 B, chloroplastic (510 aa).

A run of 12 helical transmembrane segments spans residues 24–44 (LLLF…GLIL), 59–79 (WFYF…LFRW), 99–119 (IFQF…VEYI), 124–144 (MAIT…MFLC), 149–169 (LITI…LSGY), 183–203 (YLLM…WLYG), 229–249 (ISIA…PAPF), 295–315 (WHLL…LLAI), 323–343 (MLAY…IVGD), 354–374 (YMLF…LFGL), 395–415 (ALSL…AGFF), and 418–438 (LYLF…IGLL).

The protein belongs to the complex I subunit 2 family. In terms of assembly, NDH is composed of at least 16 different subunits, 5 of which are encoded in the nucleus.

It localises to the plastid. Its subcellular location is the chloroplast thylakoid membrane. It carries out the reaction a plastoquinone + NADH + (n+1) H(+)(in) = a plastoquinol + NAD(+) + n H(+)(out). The enzyme catalyses a plastoquinone + NADPH + (n+1) H(+)(in) = a plastoquinol + NADP(+) + n H(+)(out). Its function is as follows. NDH shuttles electrons from NAD(P)H:plastoquinone, via FMN and iron-sulfur (Fe-S) centers, to quinones in the photosynthetic chain and possibly in a chloroplast respiratory chain. The immediate electron acceptor for the enzyme in this species is believed to be plastoquinone. Couples the redox reaction to proton translocation, and thus conserves the redox energy in a proton gradient. This is NAD(P)H-quinone oxidoreductase subunit 2 B, chloroplastic from Agrostis stolonifera (Creeping bentgrass).